The primary structure comprises 320 residues: Aspartate carbamoyltransferase catalytic subunit (320 aa).

Carbamoyl phosphate is bound by residues R57 and T58. Residue K85 coordinates L-aspartate. Positions 107, 141, and 144 each coordinate carbamoyl phosphate. R174 and R228 together coordinate L-aspartate. G269 and P270 together coordinate carbamoyl phosphate.

The protein belongs to the aspartate/ornithine carbamoyltransferase superfamily. ATCase family. As to quaternary structure, heterododecamer (2C3:3R2) of six catalytic PyrB chains organized as two trimers (C3), and six regulatory PyrI chains organized as three dimers (R2).

It carries out the reaction carbamoyl phosphate + L-aspartate = N-carbamoyl-L-aspartate + phosphate + H(+). It functions in the pathway pyrimidine metabolism; UMP biosynthesis via de novo pathway; (S)-dihydroorotate from bicarbonate: step 2/3. Its function is as follows. Catalyzes the condensation of carbamoyl phosphate and aspartate to form carbamoyl aspartate and inorganic phosphate, the committed step in the de novo pyrimidine nucleotide biosynthesis pathway. This chain is Aspartate carbamoyltransferase catalytic subunit, found in Mycobacterium ulcerans (strain Agy99).